Here is a 145-residue protein sequence, read N- to C-terminus: Beta sliding clamp (145 aa).

It belongs to the beta sliding clamp family. As to quaternary structure, forms a ring-shaped head-to-tail homodimer around DNA which binds and tethers DNA polymerases and other proteins to the DNA. The DNA replisome complex has a single clamp-loading complex (3 tau and 1 each of delta, delta', psi and chi subunits) which binds 3 Pol III cores (1 core on the leading strand and 2 on the lagging strand) each with a beta sliding clamp dimer. Additional proteins in the replisome are other copies of gamma, psi and chi, Ssb, DNA helicase and RNA primase.

It localises to the cytoplasm. Functionally, confers DNA tethering and processivity to DNA polymerases and other proteins. Acts as a clamp, forming a ring around DNA (a reaction catalyzed by the clamp-loading complex) which diffuses in an ATP-independent manner freely and bidirectionally along dsDNA. Initially characterized for its ability to contact the catalytic subunit of DNA polymerase III (Pol III), a complex, multichain enzyme responsible for most of the replicative synthesis in bacteria; Pol III exhibits 3'-5' exonuclease proofreading activity. The beta chain is required for initiation of replication as well as for processivity of DNA replication. In Vibrio harveyi (Beneckea harveyi), this protein is Beta sliding clamp (dnaN).